We begin with the raw amino-acid sequence, 135 residues long: Protein Wnt-7b (135 aa).

Disulfide bonds link C3–C17 and C5–C12. S9 carries O-palmitoleoyl serine; by PORCN lipidation. The tract at residues 41-69 (VEVVRANRLRQPTFLKIKKVRSYQKPMET) is disordered linker. 3 disulfide bridges follow: C81/C112, C97/C107, and C134/C135. N-linked (GlcNAc...) asparagine glycosylation occurs at N98.

It belongs to the Wnt family. In terms of processing, palmitoleoylation is required for efficient binding to frizzled receptors. Depalmitoleoylation leads to Wnt signaling pathway inhibition. In terms of tissue distribution, in adults, in brain and lung.

Its subcellular location is the secreted. It is found in the extracellular space. The protein resides in the extracellular matrix. Its function is as follows. Ligand for members of the frizzled family of seven transmembrane receptors that functions in the canonical Wnt/beta-catenin signaling pathway. Required for normal fusion of the chorion and the allantois during placenta development. Required for central nervous system (CNS) angiogenesis and blood-brain barrier regulation. This chain is Protein Wnt-7b (wnt7b), found in Xenopus laevis (African clawed frog).